Reading from the N-terminus, the 175-residue chain is MSHKDFNGLQAPQLLSSSSPVAKKQSSHKLRHALKHARYLNHSSKRTLKHALELHEDNQVLLEKEGSPNFQDWLSKQPGVNKTSLKYNKSLGSWISKESKPKKRFPPYFTYKGSKTTPEEAKALQQMKQSQKRFFHENMHSFLNEVAHNPMIQRFKQKQAKRAANTRQRTYKYRQ.

2 disordered regions span residues 1–32 and 156–175; these read MSHK…KLRH and KQKQ…KYRQ. Positions 14–24 are enriched in low complexity; it reads LLSSSSPVAKK.

This is an uncharacterized protein from Mycoplasma pneumoniae (strain ATCC 29342 / M129 / Subtype 1) (Mycoplasmoides pneumoniae).